The sequence spans 505 residues: Glycerol kinase (505 aa).

Threonine 12 serves as a coordination point for ADP. Residues threonine 12, threonine 13, and serine 14 each contribute to the ATP site. Position 12 (threonine 12) interacts with sn-glycerol 3-phosphate. Arginine 16 contacts ADP. Sn-glycerol 3-phosphate contacts are provided by arginine 82, glutamate 83, tyrosine 134, and aspartate 246. Arginine 82, glutamate 83, tyrosine 134, aspartate 246, and glutamine 247 together coordinate glycerol. 2 residues coordinate ADP: threonine 268 and glycine 312. ATP contacts are provided by threonine 268, glycine 312, glutamine 316, and glycine 413. Positions 413 and 417 each coordinate ADP.

The protein belongs to the FGGY kinase family.

The enzyme catalyses glycerol + ATP = sn-glycerol 3-phosphate + ADP + H(+). Its pathway is polyol metabolism; glycerol degradation via glycerol kinase pathway; sn-glycerol 3-phosphate from glycerol: step 1/1. With respect to regulation, inhibited by fructose 1,6-bisphosphate (FBP). In terms of biological role, key enzyme in the regulation of glycerol uptake and metabolism. Catalyzes the phosphorylation of glycerol to yield sn-glycerol 3-phosphate. This Beutenbergia cavernae (strain ATCC BAA-8 / DSM 12333 / CCUG 43141 / JCM 11478 / NBRC 16432 / NCIMB 13614 / HKI 0122) protein is Glycerol kinase.